A 423-amino-acid polypeptide reads, in one-letter code: Imidazolonepropionase (423 aa).

Residues His-87 and His-89 each contribute to the Fe(3+) site. 2 residues coordinate Zn(2+): His-87 and His-89. 3 residues coordinate 4-imidazolone-5-propanoate: Arg-96, Tyr-159, and His-192. Position 159 (Tyr-159) interacts with N-formimidoyl-L-glutamate. Residue His-257 coordinates Fe(3+). His-257 serves as a coordination point for Zn(2+). Residue Glu-260 coordinates 4-imidazolone-5-propanoate. Asp-331 provides a ligand contact to Fe(3+). Asp-331 contributes to the Zn(2+) binding site. Asn-333 and Gly-335 together coordinate N-formimidoyl-L-glutamate. Position 336 (Ser-336) interacts with 4-imidazolone-5-propanoate.

The protein belongs to the metallo-dependent hydrolases superfamily. HutI family. It depends on Zn(2+) as a cofactor. Fe(3+) is required as a cofactor.

The protein localises to the cytoplasm. The enzyme catalyses 4-imidazolone-5-propanoate + H2O = N-formimidoyl-L-glutamate. Its pathway is amino-acid degradation; L-histidine degradation into L-glutamate; N-formimidoyl-L-glutamate from L-histidine: step 3/3. Functionally, catalyzes the hydrolytic cleavage of the carbon-nitrogen bond in imidazolone-5-propanoate to yield N-formimidoyl-L-glutamate. It is the third step in the universal histidine degradation pathway. The sequence is that of Imidazolonepropionase from Porphyromonas gingivalis (strain ATCC BAA-308 / W83).